A 390-amino-acid chain; its full sequence is Large ribosomal subunit protein uL3y (390 aa).

Positions 1–36 (MSHRKFEHPRHGSLGFLPRKRASRHRGKVKAFPKDD) are disordered. The segment covering 18–31 (PRKRASRHRGKVKA) has biased composition (basic residues).

The protein belongs to the universal ribosomal protein uL3 family.

It is found in the cytoplasm. This chain is Large ribosomal subunit protein uL3y (ARP2), found in Arabidopsis thaliana (Mouse-ear cress).